We begin with the raw amino-acid sequence, 202 residues long: Endothelin-1 (202 aa).

A signal peptide spans 1–25 (MDYLPVLFSLLLVVFQGAPEAAVLG). Positions 26 to 50 (AELSTGPDSGGEKPAPSAPWRPRRS) are excised as a propeptide. The disordered stretch occupies residues 28–48 (LSTGPDSGGEKPAPSAPWRPR). Disulfide bonds link Cys53–Cys67 and Cys55–Cys63. A propeptide spanning residues 74-202 (VNTPEHIVPY…EKKVTHNRTH (129 aa)) is cleaved from the precursor. Residues 110 to 124 (CQCASQKDKKCWTFC) form an endothelin-like region.

Belongs to the endothelin/sarafotoxin family.

The protein localises to the secreted. Functionally, endothelins are endothelium-derived vasoconstrictor peptides. Probable ligand for G-protein coupled receptors EDNRA and EDNRB which activates PTK2B, BCAR1, BCAR3 and, GTPases RAP1 and RHOA cascade in glomerular mesangial cells. Also binds the DEAR/FBXW7-AS1 receptor. Promotes mesenteric arterial wall remodeling via activation of ROCK signaling and subsequent colocalization of NFATC3 with F-actin filaments. NFATC3 then translocates to the nucleus where it subsequently promotes the transcription of the smooth muscle hypertrophy and differentiation marker ACTA2. This chain is Endothelin-1 (EDN1), found in Felis catus (Cat).